The sequence spans 752 residues: Putative xanthine dehydrogenase molybdenum-binding subunit XdhA (752 aa).

Residues Q206, F237, R350, and A516 each coordinate Mo-molybdopterin.

The protein belongs to the xanthine dehydrogenase family. As to quaternary structure, heterotrimer of XdhA, XdhB and XdhC. Mo-molybdopterin is required as a cofactor.

It catalyses the reaction xanthine + NAD(+) + H2O = urate + NADH + H(+). It carries out the reaction hypoxanthine + NAD(+) + H2O = xanthine + NADH + H(+). The protein operates within purine metabolism; hypoxanthine degradation; urate from hypoxanthine: step 1/2. It functions in the pathway purine metabolism; hypoxanthine degradation; urate from hypoxanthine: step 2/2. Its function is as follows. Presumed to be a dehydrogenase, but possibly an oxidase. Participates in limited purine salvage (requires aspartate) but does not support aerobic growth on purines as the sole carbon source (purine catabolism). Deletion results in increased adenine sensitivity, suggesting that this protein contributes to the conversion of adenine to guanine nucleotides during purine salvage. The sequence is that of Putative xanthine dehydrogenase molybdenum-binding subunit XdhA (xdhA) from Escherichia coli (strain K12).